A 330-amino-acid chain; its full sequence is tRNA U34 carboxymethyltransferase (330 aa).

Residues lysine 91, tryptophan 105, lysine 110, glycine 130, 152 to 154, 181 to 182, methionine 196, tyrosine 200, and arginine 315 each bind carboxy-S-adenosyl-L-methionine; these read DPS and IE.

It belongs to the class I-like SAM-binding methyltransferase superfamily. CmoB family. In terms of assembly, homotetramer.

The enzyme catalyses carboxy-S-adenosyl-L-methionine + 5-hydroxyuridine(34) in tRNA = 5-carboxymethoxyuridine(34) in tRNA + S-adenosyl-L-homocysteine + H(+). Catalyzes carboxymethyl transfer from carboxy-S-adenosyl-L-methionine (Cx-SAM) to 5-hydroxyuridine (ho5U) to form 5-carboxymethoxyuridine (cmo5U) at position 34 in tRNAs. The protein is tRNA U34 carboxymethyltransferase of Shewanella denitrificans (strain OS217 / ATCC BAA-1090 / DSM 15013).